The primary structure comprises 423 residues: D-tagatose-1,6-bisphosphate aldolase subunit GatZ (423 aa).

This sequence belongs to the GatZ/KbaZ family. GatZ subfamily. As to quaternary structure, forms a complex with GatY.

It functions in the pathway carbohydrate metabolism; D-tagatose 6-phosphate degradation; D-glyceraldehyde 3-phosphate and glycerone phosphate from D-tagatose 6-phosphate: step 2/2. Component of the tagatose-1,6-bisphosphate aldolase GatYZ that is required for full activity and stability of the Y subunit. Could have a chaperone-like function for the proper and stable folding of GatY. When expressed alone, GatZ does not show any aldolase activity. Is involved in the catabolism of galactitol. The polypeptide is D-tagatose-1,6-bisphosphate aldolase subunit GatZ (Klebsiella pneumoniae subsp. pneumoniae (strain ATCC 700721 / MGH 78578)).